Reading from the N-terminus, the 163-residue chain is MCMNTSIHAHTYARTHTHSVFMSSNVTVFQWMRLMRASSRSFTQAIPAGQLLQTACSHLFTTQNTCQNALGNNTRLQHTEKVRLSIGLADFGLPGIARNTFVVPDSISRYCREGSVIGKCCPSRKSALLNKQGSLKKFKITRGETQPGVTISVLELAEIDQRF.

This is an uncharacterized protein from Homo sapiens (Human).